Consider the following 1305-residue polypeptide: Rho GTPase-activating protein 33 (1305 aa).

Residues 1–64 (MLQAQKQSDP…KPGKRLSAPR (64 aa)) are disordered. S32 is modified (phosphoserine). Residues 83 to 192 (FGHIQLLLSP…CGPVLTWMEL (110 aa)) form the PX; atypical domain. Residues 210-272 (PAVAAAHVVK…PSECVELFTE (63 aa)) form the SH3 domain. A Rho-GAP domain is found at 339–534 (CDLGEHLSNS…FLLTHVEVLF (196 aa)). Disordered regions lie at residues 575–818 (RTQG…LDIS), 864–1054 (LSDT…SFFS), and 1115–1305 (SYSG…RSYC). Over residues 582–595 (TPTEPTTPKTPASP) the composition is skewed to low complexity. The residue at position 594 (S594) is a Phosphoserine. Over residues 596 to 608 (VERRKRERAEKQR) the composition is skewed to basic and acidic residues. The segment covering 646–669 (SGSRPDTVTLRSAKSEESLSSQAS) has biased composition (polar residues). S660 carries the phosphoserine modification. Low complexity predominate over residues 694–733 (APAGSCESLSSSSSSSSSSSSSSSSESSAGGLGPLSGSPS). Phosphoserine is present on S749. Residues 774 to 786 (PGDPAPPASPAPP) show a composition bias toward pro residues. Low complexity predominate over residues 787 to 798 (ASASAFPPRATP). Polar residues predominate over residues 864-873 (LSDTCQQEIS). Residues 895–915 (LLPPPLPLLRPGGAPPPPPKN) are compositionally biased toward pro residues. Low complexity predominate over residues 916-940 (PARLMALALAERAQQVAEQQSQQEQ). Composition is skewed to polar residues over residues 992 to 1020 (RQQS…SQVS), 1039 to 1054 (SPCS…SFFS), and 1115 to 1125 (SYSGPSRSWSP). Y1188 is subject to Phosphotyrosine. The span at 1194–1208 (GPRGPSPASSSSSSP) shows a compositional bias: low complexity. R1263 carries the omega-N-methylarginine modification. Residues 1292-1305 (SWSLHSEGQTRSYC) are compositionally biased toward polar residues.

Belongs to the PX domain-containing GAP family. In terms of assembly, specifically interacts with CDC42 and RHOQ/TC10 through its Rho-GAP domain. Interacts with NEK6. Highly expressed in brain and testis. Also expressed in white adipose tissue (WAT) and muscle at a low level.

It localises to the cell membrane. In terms of biological role, may be involved in several stages of intracellular trafficking. Could play an important role in the regulation of glucose transport by insulin. May act as a downstream effector of RHOQ/TC10 in the regulation of insulin-stimulated glucose transport. This is Rho GTPase-activating protein 33 (Arhgap33) from Mus musculus (Mouse).